Here is a 327-residue protein sequence, read N- to C-terminus: Aliphatic sulfonates import ATP-binding protein SsuB (327 aa).

Residues glutamate 21–aspartate 54 form a disordered region. Residues valine 37–aspartate 54 show a composition bias toward basic and acidic residues. Positions valine 66–leucine 285 constitute an ABC transporter domain. Position 98–105 (glycine 98–serine 105) interacts with ATP. Positions alanine 300–valine 327 are disordered.

This sequence belongs to the ABC transporter superfamily. Aliphatic sulfonates importer (TC 3.A.1.17.2) family. As to quaternary structure, the complex is composed of two ATP-binding proteins (SsuB), two transmembrane proteins (SsuC) and a solute-binding protein (SsuA).

It is found in the cell inner membrane. It catalyses the reaction ATP + H2O + aliphatic sulfonate-[sulfonate-binding protein]Side 1 = ADP + phosphate + aliphatic sulfonateSide 2 + [sulfonate-binding protein]Side 1.. Part of the ABC transporter complex SsuABC involved in aliphatic sulfonates import. Responsible for energy coupling to the transport system. The protein is Aliphatic sulfonates import ATP-binding protein SsuB of Burkholderia pseudomallei (strain K96243).